Here is an 814-residue protein sequence, read N- to C-terminus: DNA topoisomerase 1 (814 aa).

A compositionally biased stretch (low complexity) spans Met1–Ser12. Positions Met1–Asp180 are disordered. The span at Ile13 to Ser22 shows a compositional bias: basic residues. A phosphoserine mark is found at Ser52, Ser54, and Ser136. Thr138 carries the phosphothreonine modification. Interaction with DNA regions lie at residues Lys404–Tyr405, Arg467–Lys472, and Ser559–Lys561. The region spanning Gly411–Trp814 is the Topo IB-type catalytic domain. Tyr773 acts as the O-(3'-phospho-DNA)-tyrosine intermediate in catalysis.

It belongs to the type IB topoisomerase family. Monomer.

The enzyme catalyses ATP-independent breakage of single-stranded DNA, followed by passage and rejoining.. In terms of biological role, releases the supercoiling and torsional tension of DNA introduced during the DNA replication and transcription by transiently cleaving and rejoining one strand of the DNA duplex. Introduces a single-strand break via transesterification at a target site in duplex DNA. The scissile phosphodiester is attacked by the catalytic tyrosine of the enzyme, resulting in the formation of a DNA-(3'-phosphotyrosyl)-enzyme intermediate and the expulsion of a 5'-OH DNA strand. TThe free DNA strand then rotates around the intact phosphodiester bond on the opposing strand, thus removing DNA supercoils. Finally, in the religation step, the DNA 5'-OH attacks the covalent intermediate to expel the active-site tyrosine and restore the DNA phosphodiester backbone. This Schizosaccharomyces pombe (strain 972 / ATCC 24843) (Fission yeast) protein is DNA topoisomerase 1 (top1).